The primary structure comprises 254 residues: Hydroxypyruvate/pyruvate aldolase (254 aa).

The active-site Proton acceptor is the His-47. A divalent metal cation is bound by residues Glu-151 and Asp-177.

This sequence belongs to the HpcH/HpaI aldolase family. A divalent metal cation is required as a cofactor.

It catalyses the reaction D-glyceraldehyde + pyruvate = 2-dehydro-3-deoxy-L-galactonate. Its function is as follows. Aldolase which can catalyze in vitro the aldolisation reaction between hydroxypyruvate (HPA) or pyruvate (PA) and D-glyceraldehyde (D-GA). The condensation of pyruvate and D-glyceraldehyde produces 2-dehydro-3-deoxy-L-galactonate as the major product. Has weak activity with hydroxypyruvate and D-glyceraldehyde. This is Hydroxypyruvate/pyruvate aldolase from Chromohalobacter salexigens (strain ATCC BAA-138 / DSM 3043 / CIP 106854 / NCIMB 13768 / 1H11).